We begin with the raw amino-acid sequence, 280 residues long: Phosphatidylglycerol--prolipoprotein diacylglyceryl transferase (280 aa).

The next 3 membrane-spanning stretches (helical) occupy residues Leu-19–Ala-39, Ile-56–Gln-76, and Ile-90–Ile-110. Residue Arg-138 participates in a 1,2-diacyl-sn-glycero-3-phospho-(1'-sn-glycerol) binding. Helical transmembrane passes span Leu-204–Gly-224 and Ile-236–Tyr-256.

Belongs to the Lgt family.

Its subcellular location is the cell membrane. The catalysed reaction is L-cysteinyl-[prolipoprotein] + a 1,2-diacyl-sn-glycero-3-phospho-(1'-sn-glycerol) = an S-1,2-diacyl-sn-glyceryl-L-cysteinyl-[prolipoprotein] + sn-glycerol 1-phosphate + H(+). Its pathway is protein modification; lipoprotein biosynthesis (diacylglyceryl transfer). Functionally, catalyzes the transfer of the diacylglyceryl group from phosphatidylglycerol to the sulfhydryl group of the N-terminal cysteine of a prolipoprotein, the first step in the formation of mature lipoproteins. The sequence is that of Phosphatidylglycerol--prolipoprotein diacylglyceryl transferase from Staphylococcus aureus (strain MRSA252).